Here is a 275-residue protein sequence, read N- to C-terminus: Sororin-B (275 aa).

Residues 1–16 (MSERKKRGSSDADSRR) show a composition bias toward basic and acidic residues. Disordered regions lie at residues 1–42 (MSER…PAPI) and 63–117 (NTGS…EIDV). 2 stretches are compositionally biased toward polar residues: residues 63 to 76 (NTGS…SNVT) and 93 to 112 (NAFS…QSSA). A KEN box motif is present at residues 91–93 (KEN). The FGF motif motif lies at 186 to 188 (FGF). The interval 253 to 275 (VDEWAAIMNAEFDEAEKFDLTVE) is C-terminal Sororin domain.

The protein belongs to the sororin family. In terms of assembly, interacts with the APC/C complex. Interacts with the chromatin-bound cohesin complex; the interaction is indirect, occurs after DNA replication and requires acetylation of the cohesin component smc3. Interacts (via the FGF motif) with pds5a and pds5b; the interaction is direct and prevents the interaction of pds5a with wapl. Ubiquitinated by the APC/C complex in G1, leading to its degradation.

The protein localises to the nucleus. The protein resides in the chromosome. Its subcellular location is the cytoplasm. Regulator of sister chromatid cohesion in mitosis stabilizing cohesin complex association with chromatin. May antagonize the action of wapl which stimulates cohesin dissociation from chromatin. Cohesion ensures that chromosome partitioning is accurate in both meiotic and mitotic cells and plays an important role in DNA repair. Required for efficient DNA double-stranded break repair. The protein is Sororin-B (cdca5-b) of Xenopus laevis (African clawed frog).